The primary structure comprises 234 residues: MQLITTENKLAGSKKALEIIEKGITSGEVNTLGLATGSTPETLYAELVKSDVDTKNVTTTNLDEYVGLAANDPNSYHYYMNELLFSKKAFKESFLPNGEATDAEAECARYEEILSEHPIDIQVLGIGTNGHIGFNEPGTPFDSLTHKVVLTDSTREANKRFFEREEDVPTHAYSMGIKSIMNAKKIILLAFGENKAQAIKETIKGPVDVNCPASVLQNHPDVTVILDNEAASLL.

Asp-63 functions as the Proton acceptor; for enolization step in the catalytic mechanism. Catalysis depends on Asn-129, which acts as the For ring-opening step. The active-site Proton acceptor; for ring-opening step is His-131. Glu-136 acts as the For ring-opening step in catalysis.

The protein belongs to the glucosamine/galactosamine-6-phosphate isomerase family. NagB subfamily.

It carries out the reaction alpha-D-glucosamine 6-phosphate + H2O = beta-D-fructose 6-phosphate + NH4(+). It functions in the pathway amino-sugar metabolism; N-acetylneuraminate degradation; D-fructose 6-phosphate from N-acetylneuraminate: step 5/5. Its function is as follows. Catalyzes the reversible isomerization-deamination of glucosamine 6-phosphate (GlcN6P) to form fructose 6-phosphate (Fru6P) and ammonium ion. The protein is Glucosamine-6-phosphate deaminase of Listeria monocytogenes serotype 4b (strain CLIP80459).